The chain runs to 238 residues: Sugar fermentation stimulation protein homolog (238 aa).

Belongs to the SfsA family.

The polypeptide is Sugar fermentation stimulation protein homolog (Bartonella tribocorum (strain CIP 105476 / IBS 506)).